We begin with the raw amino-acid sequence, 103 residues long: UPF0145 protein HH_1800 (103 aa).

The protein belongs to the UPF0145 family.

The polypeptide is UPF0145 protein HH_1800 (Helicobacter hepaticus (strain ATCC 51449 / 3B1)).